A 208-amino-acid polypeptide reads, in one-letter code: Dual specificity protein phosphatase 22-A (208 aa).

The Tyrosine-protein phosphatase domain maps to 4–144; that stretch reads GMNKVIDGLY…LQEFQMKQVS (141 aa). Residue Cys-88 is the Phosphocysteine intermediate of the active site.

It belongs to the protein-tyrosine phosphatase family. Non-receptor class dual specificity subfamily.

The protein resides in the cytoplasm. The protein localises to the nucleus. The catalysed reaction is O-phospho-L-tyrosyl-[protein] + H2O = L-tyrosyl-[protein] + phosphate. It catalyses the reaction O-phospho-L-seryl-[protein] + H2O = L-seryl-[protein] + phosphate. It carries out the reaction O-phospho-L-threonyl-[protein] + H2O = L-threonyl-[protein] + phosphate. Activates the Jnk signaling pathway. Dephosphorylates and deactivates p38 and stress-activated protein kinase/c-Jun N-terminal kinase (SAPK/JNK). The sequence is that of Dual specificity protein phosphatase 22-A from Danio rerio (Zebrafish).